The chain runs to 126 residues: Lymphocyte antigen 6E (126 aa).

A signal peptide spans 1 to 20 (MKAFLFAVLAAVLCVERAHT). A UPAR/Ly6 domain is found at 21-98 (LICFSCSDAS…CCDSFLCNIS (78 aa)). 5 disulfides stabilise this stretch: C23–C48, C26–C35, C41–C69, C73–C89, and C90–C95. N96 is a glycosylation site (N-linked (GlcNAc...) asparagine). A lipid anchor (GPI-anchor amidated serine) is attached at S98. A propeptide spans 99–126 (GSSSVKASYAVLALGILVSFVYVLRARE) (removed in mature form).

In terms of tissue distribution, expressed by thymic blast cells.

It localises to the cell membrane. The sequence is that of Lymphocyte antigen 6E (LY6E) from Gallus gallus (Chicken).